We begin with the raw amino-acid sequence, 1112 residues long: DNA repair protein rad13 (1112 aa).

An N-domain region spans residues 1–95; the sequence is MGVSGLWDIL…QTIQKRQARR (95 aa). Mg(2+) contacts are provided by Asp-30 and Asp-77. Residues 395 to 414 form the UIM domain; it reads TDDLILQLATQQSLEENKKS. The tract at residues 742–870 is I-domain; sequence KRSEKRDADE…LALEILHEFP (129 aa). Positions 777, 779, 798, 800, and 849 each coordinate Mg(2+). The interval 1056–1112 is disordered; sequence KMMASKNSSDSDSDSEDNFLASLTPKTNSSSISIENLPRKTKLSTSLLKKPSKRRRK. Positions 1079-1089 are enriched in polar residues; sequence TPKTNSSSISI.

Belongs to the XPG/RAD2 endonuclease family. XPG subfamily. Requires Mg(2+) as cofactor.

Its subcellular location is the nucleus. Functionally, single-stranded DNA endonuclease involved in excision repair of DNA damaged with UV light, bulky adducts, or cross-linking agents. Essential for the incision step of excision-repair. This Schizosaccharomyces pombe (strain 972 / ATCC 24843) (Fission yeast) protein is DNA repair protein rad13 (rad13).